The chain runs to 899 residues: Periodic tryptophan protein 2 homolog (899 aa).

WD repeat units lie at residues 9 to 52 (NLLG…TLPF), 53 to 92 (SHRKNIARIGLTPQGNLLLSIDEDGQAILTNVPRRVVLYH), 94 to 132 (SFKAPVTALSFSPSGRHFIVGLGRKIEVWHVPSTPDANA), 149 to 188 (QHFDDVRHIEWSHDSRFFLTSSKDLTARIWSVDQEEGFTP), 193 to 232 (GHRQGVVGAWFSKDQETIYTVSKDGAVFDWQYVAKPGQDE), 252 to 291 (QNSATVRCAAFHPESNLLVAGFSNGIFGLYEMPDFNMIHT), 294 to 334 (ISQN…YILK), 337 to 376 (GHFDSMNSLVYSPDGQRIVTVADDGKIKVWDTESGFCIVT), 379 to 418 (EHTSGITACEFSKKGNVLFTSSLDGSIRAWDLIRYRNFRT), 422 to 464 (PERL…DRLS), 465 to 504 (GHEGPVSSLAFAPNGGLLVSGSWDRTARIWSIFNRTQTSE), 507 to 546 (QLNSDVLDIAFRPDSLQIAISTLDGNLSFWSVSEAEQQAG), and 569 to 608 (AGTKAFNTIRYSTDGSCLLAGGNSKYICLYSVTTMVLLKK). The segment at 639–668 (DEQGEASDFEDRIDRSLPGSKRGDPSARRK) is disordered. Positions 647-668 (FEDRIDRSLPGSKRGDPSARRK) are enriched in basic and acidic residues. The WD 14 repeat unit spans residues 669–709 (NPEVRVNGVAFSPNGSAFCAASTEGLLIYSLDTTIQFDPFD). Residues 866–899 (TGSDEQPGAGGMSLNDVMQQDEGNASEDEWIGLV) form a disordered region. Over residues 889–899 (NASEDEWIGLV) the composition is skewed to acidic residues.

Belongs to the WD repeat PWP2 family.

In Neurospora crassa (strain ATCC 24698 / 74-OR23-1A / CBS 708.71 / DSM 1257 / FGSC 987), this protein is Periodic tryptophan protein 2 homolog.